The following is a 507-amino-acid chain: Glycosyltransferase family 92 protein C33H5.2 (507 aa).

The chain crosses the membrane as a helical span at residues 6–26 (VILVFCASFALFFTFIIFGRY). Residues 155–444 (RDVVMCIAPL…LKCYNEKFYD (290 aa)) enclose the GT92 domain.

Belongs to the glycosyltransferase 92 family.

It localises to the membrane. This is Glycosyltransferase family 92 protein C33H5.2 from Caenorhabditis elegans.